We begin with the raw amino-acid sequence, 307 residues long: DDRGK domain-containing protein 1 (307 aa).

The Lumenal portion of the chain corresponds to 1 to 2; sequence MD. Residues 3-23 traverse the membrane as a helical segment; it reads LILLVGIAVALLVILATLYFL. Over 24–307 the chain is Cytoplasmic; that stretch reads QNKNKAAGEA…PVQSAAGGDS (284 aa). 2 stretches are compositionally biased toward low complexity: residues 32-43 and 54-83; these read EAKPAAAAPRRG and RRAQ…PAAA. Residues 32-162 form a disordered region; that stretch reads EAKPAAAAPR…EEVEAEAERK (131 aa). Over residues 117–162 the composition is skewed to basic and acidic residues; sequence KMEAKEQKRLQREHELQEREKRKVKEAKEDAERKQQEEVEAEAERK.

Belongs to the DDRGK1 family. Interacts with Atg9; the interaction is transient.

Its subcellular location is the endoplasmic reticulum membrane. Substrate adapter for ufmylation, the covalent attachment of the ubiquitin-like modifier UFM1 to substrate proteins. Required for ufmylation of Atg9; protects the nervous system during aging, possibly by stabilizing Atg9 and supporting its function. In Drosophila willistoni (Fruit fly), this protein is DDRGK domain-containing protein 1.